The primary structure comprises 490 residues: Tektin-3 (490 aa).

Thr7, Thr9, and Thr10 each carry an O-linked (GalNAc...) threonine glycan. N-linked (GlcNAc...) asparagine glycans are attached at residues Asn41, Asn86, Asn103, Asn111, Asn276, and Asn344. Residues 424-451 (VHEVDDTIQTLQQRLRDAEDTLQSLVHI) are a coiled coil.

This sequence belongs to the tektin family. Microtubule inner protein component of sperm flagellar doublet microtubules. Interacts with TEKT1, TEKT2, TEKT4 and TEKT5. Interacts with CCDC38. Post-translationally, N- and O-glycosylated. In terms of processing, may be proteolytically processed during the epididymal transit of spermatozoa. Ubiquitinated, leading to its degradation. Deubiquitinated by USP16, promoting its stability. As to expression, expressed in spermatozoa. Expressed in airway epithelial cells.

It is found in the cytoplasm. It localises to the cytoskeleton. The protein resides in the cilium axoneme. The protein localises to the flagellum axoneme. Its subcellular location is the cytoplasmic vesicle. It is found in the secretory vesicle. It localises to the acrosome outer membrane. Microtubule inner protein (MIP) part of the dynein-decorated doublet microtubules (DMTs) in cilia and flagellar axoneme. Forms filamentous polymers in the walls of ciliary and flagellar microtubules. Required for normal sperm mobility. The chain is Tektin-3 (TEKT3) from Homo sapiens (Human).